We begin with the raw amino-acid sequence, 322 residues long: CPX chromosomal region candidate gene 1 protein homolog (322 aa).

Polar residues-rich tracts occupy residues 1-23 and 37-78; these read MTSS…NETP and TNIS…TQND. The interval 1–83 is disordered; it reads MTSSNQGNDP…MTQNDPPDEE (83 aa).

This chain is CPX chromosomal region candidate gene 1 protein homolog (Cpxcr1), found in Mus musculus (Mouse).